Reading from the N-terminus, the 193-residue chain is Ion-translocating oxidoreductase complex subunit A (193 aa).

The next 6 helical transmembrane spans lie at 4–24 (FLLV…KFLG), 39–59 (IGMG…CWLV), 71–91 (FLRI…IETV), 102–122 (ALGI…LPLM), 134–154 (TLSG…FAGM), and 171–191 (PIAF…AGLV).

This sequence belongs to the NqrDE/RnfAE family. The complex is composed of six subunits: RnfA, RnfB, RnfC, RnfD, RnfE and RnfG.

The protein resides in the cellular chromatophore membrane. Functionally, part of a membrane-bound complex that couples electron transfer with translocation of ions across the membrane. Required for nitrogen fixation. Involved in electron transfer to nitrogenase. The protein is Ion-translocating oxidoreductase complex subunit A of Rhodobacter capsulatus (Rhodopseudomonas capsulata).